A 389-amino-acid chain; its full sequence is Probable nitrate transporter NarT (389 aa).

Transmembrane regions (helical) follow at residues 14 to 34, 45 to 65, 69 to 89, 97 to 117, 139 to 159, 161 to 181, 211 to 231, 246 to 266, 268 to 288, 294 to 314, 331 to 351, and 353 to 373; these read TLSL…MPFI, ISII…PFGY, IVGA…PIFF, GMLM…SVGV, GNIG…IIGW, TTVR…FIFG, WYFI…NYLV, GVFI…GDKF, AVKV…ILGI, LFTV…GLIF, IVSM…TYVA, and LTGS…IALF.

The protein belongs to the major facilitator superfamily. Nitrate/nitrite porter (TC 2.A.1.8) family.

Its subcellular location is the cell membrane. In terms of biological role, probably required for nitrate uptake under anoxic conditions. Also possibly involved in excretion of nitrite produced by the dissimilatory reduction of nitrate. In Staphylococcus aureus (strain JH9), this protein is Probable nitrate transporter NarT (narT).